We begin with the raw amino-acid sequence, 342 residues long: Serine/threonine-protein kinase-transforming protein mos (342 aa).

Residues 63–338 enclose the Protein kinase domain; the sequence is VCLMHRLGSG…LLQRDLKAFR (276 aa). ATP contacts are provided by residues 69–77 and K90; that span reads LGSGGFGSV. The Proton acceptor role is filled by D198.

It belongs to the protein kinase superfamily. Ser/Thr protein kinase family.

The enzyme catalyses L-seryl-[protein] + ATP = O-phospho-L-seryl-[protein] + ADP + H(+). It catalyses the reaction L-threonyl-[protein] + ATP = O-phospho-L-threonyl-[protein] + ADP + H(+). The polypeptide is Serine/threonine-protein kinase-transforming protein mos (V-MOS) (Myeloproliferative sarcoma virus (isolate ts159)).